Reading from the N-terminus, the 452-residue chain is Elongation factor Tu, mitochondrial (452 aa).

Residues 1–43 (MAAATLLRATPRFSGLCASPTPFLQGRLRPLKAPASPFLCRGL) constitute a mitochondrion transit peptide. Residues 55 to 251 (KPHVNVGTIG…AVDTYIPVPT (197 aa)) enclose the tr-type G domain. The G1 stretch occupies residues 64-71 (GHVDHGKT). 5 residues coordinate GTP: aspartate 67, glycine 69, lysine 70, threonine 71, and threonine 72. Residue threonine 71 participates in Mg(2+) binding. Lysine 79 carries the N6-acetyllysine modification. Lysine 88 is modified (N6-acetyllysine; alternate). Residue lysine 88 is modified to N6-succinyllysine; alternate. Positions 105-109 (GITIN) are G2. The tract at residues 126 to 129 (DCPG) is G3. Residues asparagine 181, aspartate 184, serine 219, alanine 220, and leucine 221 each coordinate GTP. Positions 181-184 (NKAD) are G4. A G5 region spans residues 219–221 (SAL). An N6-succinyllysine modification is found at lysine 234. Lysine 256 is modified (N6-acetyllysine). Threonine 278 is subject to Phosphothreonine. Position 286 is an N6-succinyllysine (lysine 286). A Phosphoserine modification is found at serine 312. An N6-acetyllysine mark is found at lysine 361 and lysine 418.

This sequence belongs to the TRAFAC class translation factor GTPase superfamily. Classic translation factor GTPase family. EF-Tu/EF-1A subfamily. In terms of assembly, interacts with NLRX1. Interacts with ATG16L1.

The protein localises to the mitochondrion. It carries out the reaction GTP + H2O = GDP + phosphate + H(+). GTP hydrolase that promotes the GTP-dependent binding of aminoacyl-tRNA to the A-site of ribosomes during protein biosynthesis. Also plays a role in the regulation of autophagy and innate immunity. Recruits ATG5-ATG12 and NLRX1 at mitochondria and serves as a checkpoint of the RIGI-MAVS pathway. In turn, inhibits RLR-mediated type I interferon while promoting autophagy. The sequence is that of Elongation factor Tu, mitochondrial (Tufm) from Mus musculus (Mouse).